A 43-amino-acid polypeptide reads, in one-letter code: Protein PsbN (43 aa).

The helical transmembrane segment at 5-27 threads the bilayer; sequence TVLSIFISSLLLGITGYSIYTAF.

It belongs to the PsbN family.

The protein localises to the plastid. The protein resides in the chloroplast thylakoid membrane. In terms of biological role, may play a role in photosystem I and II biogenesis. The chain is Protein PsbN from Porphyra purpurea (Red seaweed).